We begin with the raw amino-acid sequence, 55 residues long: Conotoxin Cal6.40 (55 aa).

An N-terminal signal peptide occupies residues 1–21 (MSGSGVLLLTLLLLVPLSALA). Intrachain disulfides connect Cys24-Cys36, Cys29-Cys41, and Cys35-Cys50.

Expressed by the venom duct.

The protein resides in the secreted. Its function is as follows. Probable neurotoxin. The polypeptide is Conotoxin Cal6.40 (Californiconus californicus (California cone)).